The primary structure comprises 215 residues: Phosphatidylserine decarboxylase proenzyme (215 aa).

The active-site Schiff-base intermediate with substrate; via pyruvic acid is the serine 181. Pyruvic acid (Ser); by autocatalysis is present on serine 181.

It belongs to the phosphatidylserine decarboxylase family. PSD-A subfamily. Heterodimer of a large membrane-associated beta subunit and a small pyruvoyl-containing alpha subunit. The cofactor is pyruvate. In terms of processing, is synthesized initially as an inactive proenzyme. Formation of the active enzyme involves a self-maturation process in which the active site pyruvoyl group is generated from an internal serine residue via an autocatalytic post-translational modification. Two non-identical subunits are generated from the proenzyme in this reaction, and the pyruvate is formed at the N-terminus of the alpha chain, which is derived from the carboxyl end of the proenzyme. The post-translation cleavage follows an unusual pathway, termed non-hydrolytic serinolysis, in which the side chain hydroxyl group of the serine supplies its oxygen atom to form the C-terminus of the beta chain, while the remainder of the serine residue undergoes an oxidative deamination to produce ammonia and the pyruvoyl prosthetic group on the alpha chain.

It localises to the cell membrane. The enzyme catalyses a 1,2-diacyl-sn-glycero-3-phospho-L-serine + H(+) = a 1,2-diacyl-sn-glycero-3-phosphoethanolamine + CO2. It functions in the pathway phospholipid metabolism; phosphatidylethanolamine biosynthesis; phosphatidylethanolamine from CDP-diacylglycerol: step 2/2. Functionally, catalyzes the formation of phosphatidylethanolamine (PtdEtn) from phosphatidylserine (PtdSer). In Polynucleobacter asymbioticus (strain DSM 18221 / CIP 109841 / QLW-P1DMWA-1) (Polynucleobacter necessarius subsp. asymbioticus), this protein is Phosphatidylserine decarboxylase proenzyme.